A 492-amino-acid chain; its full sequence is Argininosuccinate lyase (492 aa).

The protein belongs to the lyase 1 family. Argininosuccinate lyase subfamily.

It localises to the cytoplasm. It catalyses the reaction 2-(N(omega)-L-arginino)succinate = fumarate + L-arginine. It participates in amino-acid biosynthesis; L-arginine biosynthesis; L-arginine from L-ornithine and carbamoyl phosphate: step 3/3. The sequence is that of Argininosuccinate lyase from Methanocorpusculum labreanum (strain ATCC 43576 / DSM 4855 / Z).